The following is a 356-amino-acid chain: tRNA-splicing endonuclease subunit SEN2 (356 aa).

Catalysis depends on residues tyrosine 268, histidine 276, and lysine 307.

It belongs to the tRNA-intron endonuclease family. In terms of assembly, heterotetramer composed of SEN2, SEN15, SEN34 and SEN54. Interacts directly with SEN54.

It catalyses the reaction pretRNA = a 3'-half-tRNA molecule with a 5'-OH end + a 5'-half-tRNA molecule with a 2',3'-cyclic phosphate end + an intron with a 2',3'-cyclic phosphate and a 5'-hydroxyl terminus.. Constitutes one of the two catalytic subunit of the tRNA-splicing endonuclease complex, a complex responsible for identification and cleavage of the splice sites in pre-tRNA. It cleaves pre-tRNA at the 5'- and 3'-splice sites to release the intron. The products are an intron and two tRNA half-molecules bearing 2',3'-cyclic phosphate and 5'-OH termini. There are no conserved sequences at the splice sites, but the intron is invariably located at the same site in the gene, placing the splice sites an invariant distance from the constant structural features of the tRNA body. This subunit may anchor the endonuclease complex to the nuclear membrane. Probably carries the active site for 5'-splice site cleavage. The polypeptide is tRNA-splicing endonuclease subunit SEN2 (SEN2) (Eremothecium gossypii (strain ATCC 10895 / CBS 109.51 / FGSC 9923 / NRRL Y-1056) (Yeast)).